Reading from the N-terminus, the 168-residue chain is Phosphopantetheine adenylyltransferase (168 aa).

Residue serine 9 participates in substrate binding. Residues 9–10 (SF) and histidine 17 each bind ATP. Residues lysine 41, leucine 73, and arginine 87 each contribute to the substrate site. ATP-binding positions include 88–90 (GLR), glutamate 98, and 123–129 (YAFLSSS).

It belongs to the bacterial CoaD family. Homohexamer. The cofactor is Mg(2+).

The protein resides in the cytoplasm. The catalysed reaction is (R)-4'-phosphopantetheine + ATP + H(+) = 3'-dephospho-CoA + diphosphate. It participates in cofactor biosynthesis; coenzyme A biosynthesis; CoA from (R)-pantothenate: step 4/5. In terms of biological role, reversibly transfers an adenylyl group from ATP to 4'-phosphopantetheine, yielding dephospho-CoA (dPCoA) and pyrophosphate. The sequence is that of Phosphopantetheine adenylyltransferase from Heliobacterium modesticaldum (strain ATCC 51547 / Ice1).